Reading from the N-terminus, the 627-residue chain is MELGGPGAPRLLPPLLLLLGTGLLRASSHVETRAHAEERLLKKLFSGYNKWSRPVANISDVVLVRFGLSIAQLIDVDEKNQMMTTNVWVKQEWHDYKLRWDPADYENVTSIRIPSELIWRPDIVLYNNADGDFAVTHLTKAHLFHDGRVQWTPPAIYKSSCSIDVTFFPFDQQNCTMKFGSWTYDKAKIDLVNMHSRVDQLDFWESGEWVIVDAVGTYNTRKYECCAEIYPDITYAFVIRRLPLFYTINLIIPCLLISCLTVLVFYLPSECGEKITLCISVLLSLTVFLLLITEIIPSTSLVIPLIGEYLLFTMIFVTLSIVITVFVLNVHHRSPRTHTMPTWVRRVFLDIVPRLLLMKRPSVVKDNCRRLIESMHKMASAPRFWPEPEGEPPATSGTQSLHPPSPSFCIPLDVPAEPGPSCKSPSDQLPAQQPLEAEKASPHASPGPCRPPHGTQAPGLAKARSLSVQHMSSPGEAVEGGIRCRSRSIQYCVPRDDATSEAGGQAAGALASRNTHSAELPPPDRPSPCKCTCKKEPSSVSPSATVKARSTKAPPRHLPLSPALTRAVEGVQYIADHLKAEDTDFSVKEDWKYVAMVIDRIFLWMFIIVCLLGTVGLFLPPWLAGMI.

Residues 1–28 (MELGGPGAPRLLPPLLLLLGTGLLRASS) form the signal peptide. Topologically, residues 29–242 (HVETRAHAEE…ITYAFVIRRL (214 aa)) are extracellular. A glycan (N-linked (GlcNAc...) asparagine) is linked at Asn57. Residues Val76 and Glu78 each contribute to the Ca(2+) site. N-linked (GlcNAc...) asparagine glycosylation is found at Asn107 and Asn174. Disulfide bonds link Cys161-Cys175 and Cys225-Cys226. Residues 243 to 267 (PLFYTINLIIPCLLISCLTVLVFYL) form a helical membrane-spanning segment. Residue Cys271 is the site of S-palmitoyl cysteine attachment. 2 helical membrane-spanning segments follow: residues 275–293 (ITLC…LLIT) and 309–330 (YLLF…VLNV). Topologically, residues 331 to 600 (HHRSPRTHTM…WKYVAMVIDR (270 aa)) are cytoplasmic. 2 disordered regions span residues 382–479 (PRFW…EAVE) and 497–559 (DATS…RHLP). Phosphoserine occurs at positions 424, 538, and 541. The chain crosses the membrane as a helical span at residues 601–619 (IFLWMFIIVCLLGTVGLFL).

The protein belongs to the ligand-gated ion channel (TC 1.A.9) family. Acetylcholine receptor (TC 1.A.9.1) subfamily. Alpha-4/CHRNA4 sub-subfamily. As to quaternary structure, neuronal AChR is composed of two different types of subunits: alpha and beta. CHRNA4 forms heteropentameric neuronal acetylcholine receptors with CHRNB2 and CHRNB4, as well as CHRNA5 and CHRNB3 as accesory subunits. Found in two major stoichiometric forms, LS (low agonist sensitivity): (CHRNA4)3:(CHRNB2)2 and HS (high agonist sensitivity): (CHRNA4)2:(CHRNB2)3, the two stoichiometric forms differ in their unitary conductance, calcium permeability, ACh sensitivity and potentiation by divalent cation. Cells produce predominantly an (CHRNA4)3:(CHRNB2)2 nAChR. The (CHRNA4)2:(CHRNB2)3 expression is selectively up-regulated by nicotine and has lower single channel conductance and calcium permeability. In the striatum, also forms CHRNA4:CHRNA6:CHRNB2 complexes. Also found in the stoichiometric form: (CHRNA4:CHRNB2)2:CHRNB3. Interacts with RIC3; which is required for proper folding and assembly. Interacts with LYPD6.

The protein resides in the synaptic cell membrane. The protein localises to the cell membrane. It catalyses the reaction Ca(2+)(in) = Ca(2+)(out). It carries out the reaction K(+)(in) = K(+)(out). The catalysed reaction is Na(+)(in) = Na(+)(out). With respect to regulation, activated by a myriad of ligands such as acetylcholine, cytisine, nicotine, choline and epibatidine. Channel potentiation by calcium is stoichiometry-selective, CHRNA4:CHRNB2 nACh receptor is achieved by calcium association with topographically distinct sites framed by anionic residues within the CHRNA4 subunit and between the CHRNA4 and CHRNB2 subunits. nAChR activity is inhibited by the antagonist alpha-conotoxins BuIA, PnIA, GID and MII, small disulfide-constrained peptides from cone snails. In terms of biological role, component of neuronal acetylcholine receptors (nAChRs) that function as pentameric, ligand-gated cation channels with high calcium permeability among other activities. nAChRs are excitatory neurotrasnmitter receptors formed by a collection of nAChR subunits known to mediate synaptic transmission in the nervous system and the neuromuscular junction. Each nAchR subunit confers differential attributes to channel properties, including activation, deactivation and desensitization kinetics, pH sensitivity, cation permeability, and binding to allosteric modulators. CHRNA4 forms heteropentameric neuronal acetylcholine receptors with CHRNB2 and CHRNB4, as well as CHRNA5 and CHRNB3 as accesory subunits. Is the most abundant nAChR subtype expressed in the central nervous system. Found in two major stoichiometric forms,(CHRNA4)3:(CHRNB2)2 and (CHRNA4)2:(CHRNB2)3, the two stoichiometric forms differ in their unitary conductance, calcium permeability, ACh sensitivity and potentiation by divalent cation. Involved in the modulation of calcium-dependent signaling pathways, influences the release of neurotransmitters, including dopamine, glutamate and GABA. The sequence is that of Neuronal acetylcholine receptor subunit alpha-4 (CHRNA4) from Pan troglodytes (Chimpanzee).